The following is a 66-amino-acid chain: Beta-toxin Cbo2 (66 aa).

The 66-residue stretch at 1-66 (KEGYIVNYHD…VWPLPKKTCN (66 aa)) folds into the LCN-type CS-alpha/beta domain. Intrachain disulfides connect Cys12-Cys65, Cys16-Cys41, Cys25-Cys46, and Cys29-Cys48. Asn66 carries the asparagine amide modification.

This sequence belongs to the long (4 C-C) scorpion toxin superfamily. Sodium channel inhibitor family. Beta subfamily. As to expression, expressed by the venom gland.

It is found in the secreted. Functionally, beta toxins bind voltage-independently at site-4 of sodium channels and shift the voltage of activation toward more negative potentials thereby affecting sodium channel activation and promoting spontaneous and repetitive firing. A mixture of Cbo2 and Cbo3 is weakly active on the human voltage-gated sodium channels Nav1.4/SCN4A and Nav1.6/SCN8A when tested at 200 nM. In vivo, is toxic to mice when intraperitoneally injected. The protein is Beta-toxin Cbo2 of Centruroides bonito (Scorpion).